The sequence spans 2028 residues: Protein Daple (2028 aa).

The region spanning 11–131 is the Calponin-homology (CH) domain; it reads LFLQSPLVTW…KVLLLVLGCA (121 aa). Residues 222–250 are disordered; that stretch reads AQHPPSPIKSSSADSTPSPTSSLSSEDKQ. A phosphoserine mark is found at Ser-227 and Ser-239. The segment covering 229 to 245 has biased composition (low complexity); sequence IKSSSADSTPSPTSSLS. 4 coiled-coil regions span residues 247–428, 456–1017, 1045–1094, and 1139–1393; these read EDKQ…SMNE, ELNE…QGEG, HKEA…SSQI, and LQNH…DQYK. A Phosphoserine modification is found at Ser-486. The segment covering 1011–1024 has biased composition (polar residues); it reads RQNQGEGQHLQNSF. The interval 1011-1043 is disordered; that stretch reads RQNQGEGQHLQNSFKHPAGKTAASHQGKEAWGP. Residues 1419–1428 are compositionally biased toward basic and acidic residues; it reads KEGSRERLKS. 2 disordered regions span residues 1419 to 1724 and 1736 to 1803; these read KEGS…GAKM and AAPT…SLSR. Composition is skewed to low complexity over residues 1439–1450, 1517–1534, and 1568–1588; these read SSDPASPAASQP, SRTC…NSTP, and SRPS…PLNL. Ser-1444 is subject to Phosphoserine. Over residues 1589–1604 the composition is skewed to polar residues; that stretch reads KGSSEQLHGRSESFSS. Position 1601 is a phosphoserine (Ser-1601). Positions 1661–1691 match the GBA motif; the sequence is CSASPSSEMVTLEEFLEESNRSSPTHDTPSC. The span at 1689-1704 shows a compositional bias: basic and acidic residues; the sequence is PSCRDDLLSDYFRKAS. Positions 1792–1803 are enriched in low complexity; sequence HAPASRSASLSR. Position 1806 is a phosphoserine (Ser-1806). The disordered stretch occupies residues 1816 to 2021; sequence SGPEACKQES…PEPGGDPQTV (206 aa). Residues 1842 to 1855 show a composition bias toward polar residues; sequence SHTLQSPAPPSSHS. The segment covering 1879–1897 has biased composition (basic and acidic residues); the sequence is RPLDTRRFSLAPPKEERLA. Positions 1902–1924 are enriched in low complexity; sequence SATAPAIATAGAGAAAAGSGSNS. Phosphothreonine is present on Thr-1954. The PDZ-binding signature appears at 2025–2028; it reads YGCV. A DVL1-binding region spans residues 2026–2028; the sequence is GCV.

This sequence belongs to the CCDC88 family. Homooligomer. Interacts with DVL1 (via PDZ domain); dissociates following initiation of non-canonical Wnt signaling. Interacts (via C-terminus) with ligand-activated Wnt receptor FZD7; competes with DVL1 for binding to FZD7 and displaces DVL1 from ligand-activated FZD7. Interacts (via GBA motif) with guanine nucleotide-binding protein G(i) alpha subunits GNAI1, GNAI2 and GNAI3 (inactive GDP-bound form); interacts with higher affinity with GNAI1 and GNAI3 than with GNAI2 and interaction leads to G(i) alpha subunit activation. Does not interact with GNAO1.

The protein localises to the cytoplasm. Its subcellular location is the cell junction. In terms of biological role, required for activation of guanine nucleotide-binding proteins (G-proteins) during non-canonical Wnt signaling. Binds to ligand-activated Wnt receptor FZD7, displacing DVL1 from the FZD7 receptor and leading to inhibition of canonical Wnt signaling. Acts as a non-receptor guanine nucleotide exchange factor by also binding to guanine nucleotide-binding protein G(i) alpha (Gi-alpha) subunits, leading to their activation. Binding to Gi-alpha subunits displaces the beta and gamma subunits from the heterotrimeric G-protein complex, triggering non-canonical Wnt responses such as activation of RAC1 and PI3K-AKT signaling. Promotes apical constriction of cells via ARHGEF18. The polypeptide is Protein Daple (CCDC88C) (Homo sapiens (Human)).